The chain runs to 89 residues: Small ribosomal subunit protein uS15 (89 aa).

This sequence belongs to the universal ribosomal protein uS15 family. As to quaternary structure, part of the 30S ribosomal subunit. Forms a bridge to the 50S subunit in the 70S ribosome, contacting the 23S rRNA.

One of the primary rRNA binding proteins, it binds directly to 16S rRNA where it helps nucleate assembly of the platform of the 30S subunit by binding and bridging several RNA helices of the 16S rRNA. In terms of biological role, forms an intersubunit bridge (bridge B4) with the 23S rRNA of the 50S subunit in the ribosome. The polypeptide is Small ribosomal subunit protein uS15 (Mycobacteroides abscessus (strain ATCC 19977 / DSM 44196 / CCUG 20993 / CIP 104536 / JCM 13569 / NCTC 13031 / TMC 1543 / L948) (Mycobacterium abscessus)).